We begin with the raw amino-acid sequence, 333 residues long: Nucleoid-associated protein PSPTO_1265 (333 aa).

It belongs to the YejK family.

The protein resides in the cytoplasm. It localises to the nucleoid. The sequence is that of Nucleoid-associated protein PSPTO_1265 from Pseudomonas syringae pv. tomato (strain ATCC BAA-871 / DC3000).